Consider the following 419-residue polypeptide: O-methyltransferase desB (419 aa).

Residues 255 to 256 (GG), Asp-280, 306 to 307 (DF), and Arg-323 contribute to the S-adenosyl-L-methionine site. His-326 functions as the Proton acceptor in the catalytic mechanism.

The protein belongs to the class I-like SAM-binding methyltransferase superfamily. Cation-independent O-methyltransferase family. Requires S-adenosyl-L-methionine as cofactor.

The protein operates within secondary metabolite biosynthesis. Non-reducing polyketide synthase; part of the gene cluster that mediates the biosynthesis of the bicoumarin desertorin. The non-reducing polyketide synthase desS first catalyzes the formation of the pentaketidic 4,7-dihydroxy-5-methylcoumarin from acetyl coenzyme A and 4 malonyl coenzyme A molecules. Further O-methylation by desB leads to the formation of 7-demethylsiderin. Then, an oxidative phenol coupling catalyzed by the cytochrome P450 monooxygenase desC forms the 6,8'-dimer M-desertorin A via dimerization the monomeric precursor, 7-demethylsiderin. M-desertorin A is further converted to M-desertorin C. This Aspergillus desertorum (Emericella desertorum) protein is O-methyltransferase desB.